The following is a 406-amino-acid chain: MAFRWLSFLLLALPVLALPQTSSKEAQSFGCSTPANIPFNDDKLPDPFLFNDGTPVRSLTDWSCRRQQLASLIQGYEAGTLPPKPPIVTSTFSQNGLTGNLTVTAGFPGNTTTFSSPVTFPNGTVPTEGWPLLIAYSGLSIPIPDGIAVLTYDNSAIGEQNDQTSRGVGQFFDVYGHNATASAMSAWVWGVSRIIDVLEVTPAAHVNTAKIAVTGCSRDGKGALMAGAFEERIALTIPQESGSGGDTCWRLSKFEQDSGDVVQQATEIVQENVWFSTNFDNFVFNISVLPYDHHSLAGLIAPRPMISYENTDFEWLSPLSGFGCMTAAHPIWEAMGVPDNHGFVQVGNHSHCEFPSDLNPTLFAFFDKFLLGKEANTTIFETNEVFNGTVWNPSQWINWTTPTLSH.

Positions 1-17 (MAFRWLSFLLLALPVLA) are cleaved as a signal peptide. Cys31 and Cys64 form a disulfide bridge. N-linked (GlcNAc...) asparagine glycans are attached at residues Asn100, Asn110, Asn122, and Asn178. The GXSYXG catalytic site motif motif lies at 215–220 (GCSRDG). Cystine bridges form between Cys216–Cys352 and Cys248–Cys324. Residue Ser217 is the Nucleophile of the active site. Substrate contacts are provided by Lys221, Gln263, and Glu271. N-linked (GlcNAc...) asparagine glycosylation is present at Asn285. Trp315 contacts substrate. Asn348 carries an N-linked (GlcNAc...) asparagine glycan. Residue His351 is the Proton donor/acceptor of the active site. N-linked (GlcNAc...) asparagine glycosylation is found at Asn376, Asn387, and Asn398.

The protein belongs to the carbohydrate esterase 15 (CE15) family.

It localises to the secreted. It carries out the reaction a 4-O-methyl-alpha-D-glucuronosyl ester derivative + H2O = 4-O-methyl-alpha-D-glucuronate derivative + an alcohol + H(+). In terms of biological role, glucuronoyl esterase which may play a significant role in biomass degradation, as it is considered to disconnect hemicellulose from lignin through the hydrolysis of the ester bond between 4-O-methyl-D-glucuronic acid residues of glucuronoxylans and aromatic alcohols of lignin. The sequence is that of 4-O-methyl-glucuronoyl methylesterase from Phanerochaete carnosa (strain HHB-10118-sp) (White-rot fungus).